Consider the following 186-residue polypeptide: dCTP deaminase (186 aa).

Residue K107–R112 coordinates dCTP. The Proton donor/acceptor role is filled by E133. DCTP is bound by residues Q152, Y166, and Q176.

The protein belongs to the dCTP deaminase family. As to quaternary structure, homotrimer.

The enzyme catalyses dCTP + H2O + H(+) = dUTP + NH4(+). Its pathway is pyrimidine metabolism; dUMP biosynthesis; dUMP from dCTP (dUTP route): step 1/2. Functionally, catalyzes the deamination of dCTP to dUTP. The polypeptide is dCTP deaminase (Campylobacter fetus subsp. fetus (strain 82-40)).